The primary structure comprises 1146 residues: Integrin alpha-PS1 (1146 aa).

The N-terminal stretch at 1-30 (MLELPFTTIRPNCRLRQNLGILIILQCVLT) is a signal peptide. The Extracellular portion of the chain corresponds to 31–1085 (CYNFNLEQRL…NQQRDTSIPW (1055 aa)). 7 FG-GAP repeats span residues 38-105 (QRLP…FDDC), 121-186 (LSPP…FEEV), 193-245 (RPVQ…YLQR), 254-303 (HSDL…KSTD), 304-366 (NPIP…TLPM), 367-422 (KYTL…GLNS), and 432-494 (ELGG…RKEL). Residues Asn68, Asn86, and Asn147 are each glycosylated (N-linked (GlcNAc...) asparagine). N-linked (GlcNAc...) asparagine glycans are attached at residues Asn470, Asn511, Asn657, Asn680, Asn711, Asn718, Asn761, and Asn928. Residues 938-958 (YYSSSHRDDHSDDTQSNRNRV) form a disordered region. Residues 942-952 (SHRDDHSDDTQ) are compositionally biased toward basic and acidic residues. The N-linked (GlcNAc...) asparagine glycan is linked to Asn1027. A helical transmembrane segment spans residues 1086-1106 (LIIILGIVGGLLLLALVTYVL). Residues 1107–1146 (WKVGFFKRIRPTDPTLSGNLEKMNEEKPFLAPSKNTHHVF) are Cytoplasmic-facing.

It belongs to the integrin alpha chain family. In terms of assembly, heterodimer of an alpha and a beta subunit. The alpha subunit is composed of a heavy and a light chain linked by a disulfide bond. Alpha-PS1 associates with beta-PS. Expressed in follicle cells (at protein level). At syncytial blastoderm stage, expressed in the ectoderm but not in the mesodermal precursors. At embryonic stage 7, expressed in dorsal and ventrolateral ectoderm and in some yolk nuclei. At late stage 10, expression is homogeneous in the ectoderm and is particularly abundant in the anterior and posterior midgut primordia. At stage 11, strongly expressed in a metameric pattern in the ectoderm, in the proctodeum and in the posterior midgut primordium. At stage 12, accumulates at the segment boundaries that start to become morphologically visible, similar expression pattern is observed in the central nervous system. In third larval instar wing imaginal disk, strongly expressed in the dorsal compartment, in the adepithelial cells and in patches on the peripodial membrane covering the imaginal disk to the outside.

The protein localises to the apical cell membrane. Its subcellular location is the lateral cell membrane. It is found in the basal cell membrane. In terms of biological role, integrin alpha-PS1/beta-PS is a receptor for laminin. The polypeptide is Integrin alpha-PS1 (mew) (Drosophila melanogaster (Fruit fly)).